A 388-amino-acid polypeptide reads, in one-letter code: (S)-8-oxocitronellyl enol synthase (388 aa).

Residues 38–40, 66–67, 84–85, 108–109, and glutamine 142 each bind NADP(+); these read TGI, RR, DV, and SW. Active-site residues include lysine 146 and tyrosine 178. 2 residues coordinate substrate: lysine 146 and tyrosine 178. Residues tyrosine 178, valine 204, and 211–213 contribute to the NADP(+) site; that span reads SMM. Substrate is bound at residue serine 349.

It belongs to the short-chain dehydrogenases/reductases (SDR) family. Highly divergent. Homodimer. Expressed in internal phloem-associated parenchyma (IPAP) cells.

It localises to the cytoplasm. The protein localises to the cytosol. The catalysed reaction is (S)-8-oxocitronellyl enol + NADP(+) = (6E)-8-oxogeranial + NADPH + H(+). The enzyme catalyses (S)-8-oxocitronellyl enol + NAD(+) = (6E)-8-oxogeranial + NADH + H(+). Functionally, iridoid synthase that catalyzes the first step in generation of the iridoid ring scaffold using the linear monoterpene (6E)-8-oxogeranial as substrate. Iridoids comprise a large family of distinctive bicyclic monoterpenes that possess a wide range of pharmacological activities, including anticancer, anti-inflammatory, antifungal and antibacterial activities. This Catharanthus roseus (Madagascar periwinkle) protein is (S)-8-oxocitronellyl enol synthase.